The sequence spans 520 residues: Translation initiation factor IF3-1, mitochondrial (520 aa).

The N-terminal 66 residues, 1–66, are a transit peptide targeting the mitochondrion; it reads MAIWRIINRS…SNIFQNLRFL (66 aa). The span at 271–282 shows a compositional bias: basic and acidic residues; the sequence is ARVKEESPKPDS. A disordered region spans residues 271-520; it reads ARVKEESPKP…YGIFSTPKTK (250 aa). Residues 336–361 show a composition bias toward polar residues; that stretch reads EPQSPNQHVNPQRPRFSNQAPNQQPT. Pro residues predominate over residues 369–379; the sequence is PNQPPSAPRPQ. 2 stretches are compositionally biased toward polar residues: residues 404-422 and 458-468; these read NQAPNQQSTGRFNPQFPNQ and FQNQAPNQQPT. Residues 473 to 485 show a composition bias toward pro residues; the sequence is PQPPNPPRAPPRP.

This sequence belongs to the IF-3 family. In terms of assembly, monomer.

It localises to the mitochondrion. In terms of biological role, IF-3 binds to the 30S ribosomal subunit and shifts the equilibrium between 70S ribosomes and their 50S and 30S subunits in favor of the free subunits, thus enhancing the availability of 30S subunits on which protein synthesis initiation begins. In Arabidopsis thaliana (Mouse-ear cress), this protein is Translation initiation factor IF3-1, mitochondrial.